The sequence spans 287 residues: Ret finger protein-like 4A (287 aa).

An RING-type; degenerate zinc finger spans residues 11-53; the sequence is CYFCFRCLESPVYLNCGYICCLKCLDSLEKSPEGDGVLCPTCS. The B30.2/SPRY domain occupies 78 to 278; it reads EPQLNFILTM…LSICPVTNPG (201 aa).

In terms of assembly, interacts with PSMB1, UBE2A and CCNB1. As to expression, expressed in the ovaries and oocytes (at protein level). Expression restricted to gonads. In testis, present at later stages of spermatogeneis and abundant in elongating spermatids.

The protein localises to the cytoplasm. It localises to the nucleus. In Mus musculus (Mouse), this protein is Ret finger protein-like 4A (Rfpl4a).